The sequence spans 287 residues: 2' cyclic ADP-D-ribose synthase BtTIR (287 aa).

Residues 155-287 (KQYDFFISHA…DDIVENLKNL (133 aa)) enclose the TIR domain. The active site involves glutamate 230.

As to quaternary structure, homodimer.

It carries out the reaction NAD(+) = 2'cADPR + nicotinamide + H(+). NAD(+) hydrolase (NADase) that cleaves NAD(+) into nicotinamide and 2' cyclic ADP-D-ribose (2'cADPR). This Bacteroides thetaiotaomicron protein is 2' cyclic ADP-D-ribose synthase BtTIR.